The following is a 421-amino-acid chain: 2-deoxystreptamine N-acetyl-D-glucosaminyltransferase (421 aa).

It belongs to the glycosyltransferase group 1 family. Glycosyltransferase 4 subfamily.

It carries out the reaction 2-deoxystreptamine + UDP-N-acetyl-alpha-D-glucosamine = 2'-N-acetylparomamine + UDP + H(+). Its pathway is antibiotic biosynthesis; neomycin biosynthesis. Functionally, glycosyltransferase involved in the biosynthesis of neomycin by mediating conversion of 2-deoxystreptamine (2-DOS) to 2'-N-acetylparomamine using UDP-alpha-D-glucosamine as sugar donor. The polypeptide is 2-deoxystreptamine N-acetyl-D-glucosaminyltransferase (neoD) (Streptomyces fradiae (Streptomyces roseoflavus)).